The primary structure comprises 186 residues: Orotate phosphoribosyltransferase (186 aa).

Residues Arg-96, Lys-100, His-102, and 121–129 (DDVATTGTS) contribute to the 5-phospho-alpha-D-ribose 1-diphosphate site. Orotate contacts are provided by Thr-125 and Arg-153.

It belongs to the purine/pyrimidine phosphoribosyltransferase family. PyrE subfamily. Homodimer. Mg(2+) serves as cofactor.

It carries out the reaction orotidine 5'-phosphate + diphosphate = orotate + 5-phospho-alpha-D-ribose 1-diphosphate. The protein operates within pyrimidine metabolism; UMP biosynthesis via de novo pathway; UMP from orotate: step 1/2. Catalyzes the transfer of a ribosyl phosphate group from 5-phosphoribose 1-diphosphate to orotate, leading to the formation of orotidine monophosphate (OMP). This chain is Orotate phosphoribosyltransferase, found in Aeropyrum pernix (strain ATCC 700893 / DSM 11879 / JCM 9820 / NBRC 100138 / K1).